Reading from the N-terminus, the 431-residue chain is Large envelope protein (431 aa).

A lipid anchor (N-myristoyl glycine; by host) is attached at Gly-2. The interval 2–148 (GNNIKVTFNP…PPLRDTHPHL (147 aa)) is pre-S1. A pre-S region spans residues 2–207 (GNNIKVTFNP…PSTTGDPALS (206 aa)). The Virion surface; in external conformation portion of the chain corresponds to 2-214 (GNNIKVTFNP…ALSPEMSPSS (213 aa)). The Intravirion; in internal conformation portion of the chain corresponds to 2–286 (GNNIKVTFNP…NGFRWMYLRR (285 aa)). Asn-3 carries N-linked (GlcNAc...) asparagine glycosylation. The disordered stretch occupies residues 115–147 (IPRGLVPPQTPTNRDQGRKPTPPTPPLRDTHPH). The interval 149 to 207 (TMKNQTFHLQGFVDGLRDLTTTERQHNAYGDPFTTLSPAVPTVSTILSPPSTTGDPALS) is pre-S2. The chain crosses the membrane as a helical span at residues 215 to 235 (LLGLLAGLQVVYFLWTKILTI). The Intravirion; in external conformation segment spans residues 236-286 (AQNLDWWWTSLSFPGGIPECTGQNSQFQTCKHLPTSCPPTCNGFRWMYLRR). A helical transmembrane segment spans residues 287–307 (FIIYLLVLLLCLIFLLVLLDW). Over 308-379 (KGFIPVCPLQ…WALARFSWLN (72 aa)) the chain is Virion surface. Residue Asn-351 is glycosylated (N-linked (GlcNAc...) asparagine; by host). Residues 380–400 (LLVPLLQWLGGISLIAWFLLI) traverse the membrane as a helical segment. Residues 401 to 406 (WMIWFW) lie on the Intravirion side of the membrane. A helical membrane pass occupies residues 407–429 (GPALLSILPPFIPIFVLFFLIWV). Residues 430-431 (YI) are Virion surface-facing.

This sequence belongs to the orthohepadnavirus major surface antigen family. In its internal form (Li-HBsAg), interacts with the capsid protein and with the isoform S. Interacts with host chaperone CANX. As to quaternary structure, associates with host chaperone CANX through its pre-S2 N glycan; this association may be essential for isoform M proper secretion. In terms of assembly, interacts with isoform L. Interacts with the antigens of satellite virus HDV (HDVAgs); this interaction is required for encapsidation of HDV genomic RNA. Isoform M is N-terminally acetylated by host at a ratio of 90%, and N-glycosylated by host at the pre-S2 region. Post-translationally, myristoylated.

It is found in the virion membrane. Its function is as follows. The large envelope protein exists in two topological conformations, one which is termed 'external' or Le-HBsAg and the other 'internal' or Li-HBsAg. In its external conformation the protein attaches the virus to cell receptors and thereby initiating infection. This interaction determines the species specificity and liver tropism. This attachment induces virion internalization predominantly through caveolin-mediated endocytosis. The large envelope protein also assures fusion between virion membrane and endosomal membrane. In its internal conformation the protein plays a role in virion morphogenesis and mediates the contact with the nucleocapsid like a matrix protein. In terms of biological role, the middle envelope protein plays an important role in the budding of the virion. It is involved in the induction of budding in a nucleocapsid independent way. In this process the majority of envelope proteins bud to form subviral lipoprotein particles of 22 nm of diameter that do not contain a nucleocapsid. This is Large envelope protein from Marmota monax (Woodchuck).